Consider the following 635-residue polypeptide: Early transcription factor 70 kDa subunit (635 aa).

In terms of domain architecture, Helicase ATP-binding spans 32–185; sequence RSILDENNSV…SNIISIMSDE (154 aa). 45 to 52 lines the ATP pocket; it reads HIMGSGKT. The DEXH box signature appears at 135-138; that stretch reads DEAH.

Belongs to the helicase family. VETF subfamily. In terms of assembly, heterodimer of a 70 kDa and a 82 kDa subunit. Part of the early transcription complex composed of ETF, RAP94, and the DNA-directed RNA polymerase.

The protein resides in the virion. In terms of biological role, acts with RNA polymerase to initiate transcription from early gene promoters. Is recruited by the RPO-associated protein of 94 kDa (RAP94) to form the early transcription complex, which also contains the core RNA polymerase. ETF heterodimer binds to early gene promoters. The polypeptide is Early transcription factor 70 kDa subunit (VETFS) (Homo sapiens (Human)).